The primary structure comprises 360 residues: Photosystem II protein D1 (360 aa).

The next 3 helical transmembrane spans lie at 29–46 (YIGWFGCLMFPTLLTATS), 118–133 (HFLLGVASYMGREWEL), and 142–156 (WIFVAFSAPVAAASA). Position 118 (His118) interacts with chlorophyll a. Residue Tyr126 coordinates pheophytin a. Positions 170 and 189 each coordinate [CaMn4O5] cluster. The helical transmembrane segment at 197–218 (FHMAGVAGVFGGSLFSAMHGSL) threads the bilayer. Residue His198 participates in chlorophyll a binding. A quinone is bound by residues His215 and 264 to 265 (SF). His215 contributes to the Fe cation binding site. Fe cation is bound at residue His272. Residues 274-288 (FLALWPVVGIWLTAM) form a helical membrane-spanning segment. [CaMn4O5] cluster-binding residues include His332, Glu333, Asp342, and Ala344. The propeptide occupies 345 to 360 (SGEVLPVALTAPAVNG).

The protein belongs to the reaction center PufL/M/PsbA/D family. In terms of assembly, PSII is composed of 1 copy each of membrane proteins PsbA, PsbB, PsbC, PsbD, PsbE, PsbF, PsbH, PsbI, PsbJ, PsbK, PsbL, PsbM, PsbT, PsbX, PsbY, PsbZ, Psb30/Ycf12, at least 3 peripheral proteins of the oxygen-evolving complex and a large number of cofactors. It forms dimeric complexes. The D1/D2 heterodimer binds P680, chlorophylls that are the primary electron donor of PSII, and subsequent electron acceptors. It shares a non-heme iron and each subunit binds pheophytin, quinone, additional chlorophylls, carotenoids and lipids. D1 provides most of the ligands for the Mn4-Ca-O5 cluster of the oxygen-evolving complex (OEC). There is also a Cl(-1) ion associated with D1 and D2, which is required for oxygen evolution. The PSII complex binds additional chlorophylls, carotenoids and specific lipids. is required as a cofactor. Post-translationally, tyr-161 forms a radical intermediate that is referred to as redox-active TyrZ, YZ or Y-Z. C-terminally processed by CTPA; processing is essential to allow assembly of the oxygen-evolving complex and thus photosynthetic growth.

Its subcellular location is the plastid. It localises to the chloroplast thylakoid membrane. It catalyses the reaction 2 a plastoquinone + 4 hnu + 2 H2O = 2 a plastoquinol + O2. Photosystem II (PSII) is a light-driven water:plastoquinone oxidoreductase that uses light energy to abstract electrons from H(2)O, generating O(2) and a proton gradient subsequently used for ATP formation. It consists of a core antenna complex that captures photons, and an electron transfer chain that converts photonic excitation into a charge separation. The D1/D2 (PsbA/PsbD) reaction center heterodimer binds P680, the primary electron donor of PSII as well as several subsequent electron acceptors. In Phaeodactylum tricornutum (strain CCAP 1055/1), this protein is Photosystem II protein D1.